The sequence spans 259 residues: Glutamate racemase (259 aa).

Substrate-binding positions include 7-8 and 39-40; these read DS and YG. The active-site Proton donor/acceptor is the Cys70. Position 71 to 72 (71 to 72) interacts with substrate; the sequence is NS. Residue Cys180 is the Proton donor/acceptor of the active site. 181–182 provides a ligand contact to substrate; that stretch reads TH.

Belongs to the aspartate/glutamate racemases family.

It carries out the reaction L-glutamate = D-glutamate. It functions in the pathway cell wall biogenesis; peptidoglycan biosynthesis. Provides the (R)-glutamate required for cell wall biosynthesis. The polypeptide is Glutamate racemase (Hydrogenobaculum sp. (strain Y04AAS1)).